The primary structure comprises 845 residues: Beta-galactosidase 11 (845 aa).

Residues 1–26 (MRKHSLDRWLLTAVLVVLLSSSSSFA) form the signal peptide. Asn-104 carries an N-linked (GlcNAc...) asparagine glycan. Glu-197 (proton donor) is an active-site residue. Residue Glu-268 is the Nucleophile of the active site. N-linked (GlcNAc...) asparagine glycosylation is found at Asn-269, Asn-300, Asn-395, Asn-752, Asn-784, and Asn-814. The 90-residue stretch at 751 to 840 (DNVSLTATLK…KMLAVQVKCG (90 aa)) folds into the SUEL-type lectin domain.

The protein belongs to the glycosyl hydrolase 35 family.

It localises to the secreted. It is found in the extracellular space. The protein resides in the apoplast. It catalyses the reaction Hydrolysis of terminal non-reducing beta-D-galactose residues in beta-D-galactosides.. The sequence is that of Beta-galactosidase 11 (BGAL11) from Arabidopsis thaliana (Mouse-ear cress).